The primary structure comprises 538 residues: Neutral protease B (538 aa).

An N-terminal signal peptide occupies residues 1–28 (MRNLTKTSLLLAGLCTAAQMVFVTHASA). A propeptide spans 29–223 (EESIEYDHTY…VIESFNAIHE (195 aa)) (activation peptide). Asp-365 contributes to the Ca(2+) binding site. Position 369 (His-369) interacts with Zn(2+). The active site involves Glu-370. Residues His-373 and Glu-393 each contribute to the Zn(2+) site. Residues Asp-404, Asp-406, Asp-407, Glu-409, Glu-412, Tyr-415, Thr-416, Ile-419, and Asp-422 each coordinate Ca(2+). The segment at 421–441 (GDSLRSLEDPSKQGNPDHYSN) is disordered. His-453 (proton donor) is an active-site residue.

The protein belongs to the peptidase M4 family. Zn(2+) is required as a cofactor.

The protein localises to the secreted. Its activity is regulated as follows. Protease activity can be inhibited in vitro by either a zinc specific chelator, 1,10-phenanthroline, or a metal chelator, EDTA. The enzyme is resistant to phenylmethylsulfonyl fluoride and iodoacetic acid. Functionally, protease able to cleave casein in vitro. The chain is Neutral protease B from Bacillus subtilis (strain 168).